Consider the following 597-residue polypeptide: MAGYDVVVVGGGHAGLEAAWAAAALGVRVALVTVNPDRIGMMPCNPAVGGPGKSQLVAEVVALGGLMGRAADAAAIHTRVLNRSKGPAVQSLRVQVDRDLYALKAQEILAERPVEVLRGEVAALWVEGGRLLGVRTVDGRTLPAKAVVVAGGTFLSGVVWYGRKSRPAGRQGEPPARFLSQSLKAVGHTLRRFKTGTPPRIRADSVDFGRLEVVPPEVPPGSFTGNPGPHAARLPTWQTRTTERTHRLILENLHLSPLYAGDIQGIGPRYCPSIEDKVVRFADKESHLLFVEPDGLSTTEVYLQGFSSSLPPELQEEMVRSLPGFERAVIQRYAYAVEYDSLDPTELTRGLQSRFLPGLFSAGQVNGTSGYEEAAAQGLLAGLNAARFALGLPEVHLPRESGYIGVLVDDLVGRGTDEPYRMMTSRVELRLLCRADNADERLTPLAVAWGLRPREDLERVEAKYRRVAAELRRLEALRVEGVSGLQWLRRPENTYRALAERFPPPEPLSPEEAYQVEVRAKYAGYIERQERLREKMRDLEAFRIPEGMDFPKVPGLSREAAEKLSRHRPKSLAEAARIPGVRDSDLTALAVHLRRGA.

FAD is bound at residue 10 to 15 (GGGHAG). 267–281 (GPRYCPSIEDKVVRF) contacts NAD(+).

It belongs to the MnmG family. As to quaternary structure, homodimer. Heterotetramer of two MnmE and two MnmG subunits. Requires FAD as cofactor.

It localises to the cytoplasm. In terms of biological role, NAD-binding protein involved in the addition of a carboxymethylaminomethyl (cmnm) group at the wobble position (U34) of certain tRNAs, forming tRNA-cmnm(5)s(2)U34. This chain is tRNA uridine 5-carboxymethylaminomethyl modification enzyme MnmG, found in Thermus thermophilus (strain ATCC BAA-163 / DSM 7039 / HB27).